The chain runs to 413 residues: MDIEIIRKTDPEIAEVILKELNRQRNKIELIASENFVSRAVMEAMGTPLTNKYAEGYPGRRYYGGCEYVDMAEELARERLKKLFGAEHANVQPHSGAQANMAAYFALLKPGDTVLGMDLAHGGHLTHGSKVNFSGQIYNFVSYGVREDTGYIDYDQVEDLAKKHKPKLIVAGASAYPRIIDFKKFREIADKVGAYLMVDMAHIAGLVAAGLHPNPVPYADVVTTTTHKTLRGPRGGAILCKQEHAKAIDKALFPGTQGGPLMHIIAAKAVCFKEALSDEFKEYQKRIVENAKALANALMERGINLVSGGTDNHLMLLDLRNTGITGKELETRLDEVNITCNKNAIPFDPLGPNVTSGVRLGTPAVTTRGMKPEDMVEIADIIANMIKDENYKEKAKERVAKLLEKYPLYPDLL.

(6S)-5,6,7,8-tetrahydrofolate is bound by residues Leu-119 and 123–125; that span reads GHL. Residue Lys-228 is modified to N6-(pyridoxal phosphate)lysine.

This sequence belongs to the SHMT family. As to quaternary structure, homodimer. Requires pyridoxal 5'-phosphate as cofactor.

Its subcellular location is the cytoplasm. The enzyme catalyses (6R)-5,10-methylene-5,6,7,8-tetrahydrofolate + glycine + H2O = (6S)-5,6,7,8-tetrahydrofolate + L-serine. The protein operates within one-carbon metabolism; tetrahydrofolate interconversion. Its pathway is amino-acid biosynthesis; glycine biosynthesis; glycine from L-serine: step 1/1. Its function is as follows. Catalyzes the reversible interconversion of serine and glycine with tetrahydrofolate (THF) serving as the one-carbon carrier. This reaction serves as the major source of one-carbon groups required for the biosynthesis of purines, thymidylate, methionine, and other important biomolecules. Also exhibits THF-independent aldolase activity toward beta-hydroxyamino acids, producing glycine and aldehydes, via a retro-aldol mechanism. This is Serine hydroxymethyltransferase from Caldanaerobacter subterraneus subsp. tengcongensis (strain DSM 15242 / JCM 11007 / NBRC 100824 / MB4) (Thermoanaerobacter tengcongensis).